Reading from the N-terminus, the 358-residue chain is Magnesium-protoporphyrin IX monomethyl ester [oxidative] cyclase 3 (358 aa).

The protein belongs to the AcsF family. Requires Fe cation as cofactor.

It carries out the reaction Mg-protoporphyrin IX 13-monomethyl ester + 3 NADPH + 3 O2 + 2 H(+) = 3,8-divinyl protochlorophyllide a + 3 NADP(+) + 5 H2O. It functions in the pathway porphyrin-containing compound metabolism; chlorophyll biosynthesis (light-independent). Its function is as follows. Catalyzes the formation of the isocyclic ring in chlorophyll biosynthesis. Mediates the cyclase reaction, which results in the formation of divinylprotochlorophyllide (Pchlide) characteristic of all chlorophylls from magnesium-protoporphyrin IX 13-monomethyl ester (MgPMME). The sequence is that of Magnesium-protoporphyrin IX monomethyl ester [oxidative] cyclase 3 from Nostoc sp. (strain PCC 7120 / SAG 25.82 / UTEX 2576).